The following is a 563-amino-acid chain: Coiled-coil domain-containing protein 38 (563 aa).

Coiled coils occupy residues 129-212, 384-415, and 485-522; these read KRNT…KTEF, NIEF…RSRL, and ERMK…AVAQ. A disordered region spans residues 521–550; the sequence is AQPKKKLGRRLVYHSKPPSANKQQLPLVNE. Basic residues predominate over residues 523–533; it reads PKKKLGRRLVY.

As to quaternary structure, interacts with CCDC42, CFAP53, IFT88 and ODF2. Interacts with CCDC146. Interacts with TEKT3. Interacts with ubiquitinated histone H2A.

It is found in the cytoplasm. It localises to the cytoskeleton. The protein resides in the microtubule organizing center. The protein localises to the centrosome. Its subcellular location is the perinuclear region. It is found in the cell projection. It localises to the cilium. The protein resides in the flagellum. In terms of biological role, essential for male fertility. Required for sperm flagellum biogenesis. Also required for acrosome biogenesis. Required for the attachment of developing acrosomes to the nucleus during spermiogenesis and may be involved in the transport of fibrous sheath components. The chain is Coiled-coil domain-containing protein 38 (CCDC38) from Macaca fascicularis (Crab-eating macaque).